The chain runs to 379 residues: Cobalt-precorrin-5B C(1)-methyltransferase (379 aa).

It belongs to the CbiD family.

The enzyme catalyses Co-precorrin-5B + S-adenosyl-L-methionine = Co-precorrin-6A + S-adenosyl-L-homocysteine. It participates in cofactor biosynthesis; adenosylcobalamin biosynthesis; cob(II)yrinate a,c-diamide from sirohydrochlorin (anaerobic route): step 6/10. Functionally, catalyzes the methylation of C-1 in cobalt-precorrin-5B to form cobalt-precorrin-6A. The sequence is that of Cobalt-precorrin-5B C(1)-methyltransferase from Salmonella choleraesuis (strain SC-B67).